The chain runs to 416 residues: Adenylosuccinate synthetase (416 aa).

Residues Gly-13–Lys-19 and Gly-41–Thr-43 each bind GTP. Catalysis depends on Asp-14, which acts as the Proton acceptor. Residues Asp-14 and Gly-41 each contribute to the Mg(2+) site. IMP is bound by residues Asp-14–Lys-17, Asn-39–His-42, Thr-126, Arg-140, Gln-220, Thr-235, and Arg-299. His-42 serves as the catalytic Proton donor. Val-295 to Arg-301 contacts substrate. GTP is bound by residues Arg-301, Lys-327–Asp-329, and Ser-405–Ser-407.

It belongs to the adenylosuccinate synthetase family. Homodimer. The cofactor is Mg(2+).

It is found in the cytoplasm. It carries out the reaction IMP + L-aspartate + GTP = N(6)-(1,2-dicarboxyethyl)-AMP + GDP + phosphate + 2 H(+). It participates in purine metabolism; AMP biosynthesis via de novo pathway; AMP from IMP: step 1/2. Its function is as follows. Plays an important role in the de novo pathway of purine nucleotide biosynthesis. Catalyzes the first committed step in the biosynthesis of AMP from IMP. The chain is Adenylosuccinate synthetase from Campylobacter lari (strain RM2100 / D67 / ATCC BAA-1060).